Here is a 135-residue protein sequence, read N- to C-terminus: Ribosome-binding factor A (135 aa).

Belongs to the RbfA family. Monomer. Binds 30S ribosomal subunits, but not 50S ribosomal subunits or 70S ribosomes.

It is found in the cytoplasm. Functionally, one of several proteins that assist in the late maturation steps of the functional core of the 30S ribosomal subunit. Associates with free 30S ribosomal subunits (but not with 30S subunits that are part of 70S ribosomes or polysomes). Required for efficient processing of 16S rRNA. May interact with the 5'-terminal helix region of 16S rRNA. This is Ribosome-binding factor A from Hahella chejuensis (strain KCTC 2396).